We begin with the raw amino-acid sequence, 481 residues long: MHTCAPPHHFSSLKFPELHGSSKLNNLQVLRSFGLSKRSFKVFAVAASSSSSMSEASNYIPAAPIFLPEGPWQQIPGGVTAAKGFKAAGIYGGLRAKGEKPDLALVTCDVDATAAGAFTTNMVAAAPVLYCKNALDISKTARAVLINAGQANAATGDAGYQDVLESVGALAMLLKLKPEEVLIESTGIIGQRIKKGALLNSLPKLVNSLSPSIEGAGSAAVAITTTDLVSKSVAIESQVGGTNIKVGGMAKGSGMIHPNMATMLGVITTDALVNSDVWRKMVQISVNRSFNQITVDGDTSTNDTVIALASGLSGSISISNINCHEAMQLQACLDAVMQGLAKSIAWDGEGATCLIEVTVTGAESEAKAAKIARAVASSSLVKAAVYGRDPNWGRIAAAAGYAGIPFHQNNLRIMLGDILLMDNGQPLSFDRSAASNYLRKAGEIHGTVGIYISVGDGPGSGQAWGCDLSYDYVKINAEYTT.

Substrate contacts are provided by T225, K251, T262, E349, N476, and T481. T262 (nucleophile) is an active-site residue.

It belongs to the ArgJ family. In terms of assembly, heterodimer of an alpha and a beta chain.

The protein resides in the plastid. It localises to the chloroplast. The catalysed reaction is N(2)-acetyl-L-ornithine + L-glutamate = N-acetyl-L-glutamate + L-ornithine. It carries out the reaction L-glutamate + acetyl-CoA = N-acetyl-L-glutamate + CoA + H(+). It functions in the pathway amino-acid biosynthesis; L-arginine biosynthesis; L-ornithine and N-acetyl-L-glutamate from L-glutamate and N(2)-acetyl-L-ornithine (cyclic): step 1/1. The protein operates within amino-acid biosynthesis; L-arginine biosynthesis; N(2)-acetyl-L-ornithine from L-glutamate: step 1/4. Its function is as follows. Catalyzes two activities which are involved in the cyclic version of arginine biosynthesis: the synthesis of acetylglutamate from glutamate and acetyl-CoA, and of ornithine by transacetylation between acetylornithine and glutamate. This Populus trichocarpa (Western balsam poplar) protein is Arginine biosynthesis bifunctional protein ArgJ, chloroplastic.